Consider the following 213-residue polypeptide: Transmembrane emp24 domain-containing protein p24delta8 (213 aa).

Positions methionine 1 to serine 22 are cleaved as a signal peptide. The Lumenal segment spans residues methionine 23 to lysine 180. Residues threonine 32–threonine 148 form the GOLD domain. Asparagine 97 carries N-linked (GlcNAc...) asparagine glycosylation. Residues leucine 163 to serine 176 are a coiled coil. Position 166 is an omega-N-methylated arginine (arginine 166). N-linked (GlcNAc...) asparagine glycosylation is present at asparagine 174. A helical transmembrane segment spans residues methionine 181 to leucine 203. Positions histidine 202–isoleucine 213 are interaction with ARF1. The Cytoplasmic portion of the chain corresponds to lysine 204 to isoleucine 213. The COPII vesicle coat-binding motif lies at phenylalanine 206 to phenylalanine 207. The COPI vesicle coat-binding signature appears at phenylalanine 206–isoleucine 213.

This sequence belongs to the EMP24/GP25L family. As to quaternary structure, probably oligomerizes with other members of the EMP24/GP25L family. Associates with the COPI vesicle coat (coatomer). Associates with the COPII vesicle coat (coatomer). Interacts with ARF1 (GDP-bound).

The protein localises to the endoplasmic reticulum membrane. It is found in the golgi apparatus. Its subcellular location is the cis-Golgi network membrane. The protein resides in the golgi stack membrane. Functionally, involved in vesicular protein trafficking. Mainly functions in the early secretory pathway. Thought to act as cargo receptor at the lumenal side for incorporation of secretory cargo molecules into transport vesicles and to be involved in vesicle coat formation at the cytoplasmic side. On Golgi membranes, acts as a primary receptor for ARF1-GDP which is involved in COPI-vesicle formation. In Arabidopsis thaliana (Mouse-ear cress), this protein is Transmembrane emp24 domain-containing protein p24delta8.